The primary structure comprises 148 residues: Large-conductance mechanosensitive channel (148 aa).

Transmembrane regions (helical) follow at residues 16 to 36 (VMDL…VNSI) and 89 to 109 (GSFI…FLMV).

Belongs to the MscL family. Homopentamer.

It is found in the cell inner membrane. Channel that opens in response to stretch forces in the membrane lipid bilayer. May participate in the regulation of osmotic pressure changes within the cell. In Paraburkholderia phytofirmans (strain DSM 17436 / LMG 22146 / PsJN) (Burkholderia phytofirmans), this protein is Large-conductance mechanosensitive channel.